A 199-amino-acid polypeptide reads, in one-letter code: MSGPRIGILALQGDVREHARALTEAGARPVAVRHAVELAEVDGLVLPGGESTTIGRLLRVFELLEPLRAAVAAGLPVFGSCAGMILLARDVVGGRPDQPLIGGLDIVVRRNAFGRQVDSFEAHLEVVGVAGPPVHAVFIRAPWVEKAGDAVEVLARVAEAPVTVRQGPLLATAFHPELTGDARVHRLFVDSVRSSGSGR.

49-51 (GES) is an L-glutamine binding site. C81 functions as the Nucleophile in the catalytic mechanism. Residues R110 and 139–140 (IR) contribute to the L-glutamine site. Active-site charge relay system residues include H175 and E177.

It belongs to the glutaminase PdxT/SNO family. As to quaternary structure, in the presence of PdxS, forms a dodecamer of heterodimers. Only shows activity in the heterodimer.

It carries out the reaction aldehydo-D-ribose 5-phosphate + D-glyceraldehyde 3-phosphate + L-glutamine = pyridoxal 5'-phosphate + L-glutamate + phosphate + 3 H2O + H(+). The enzyme catalyses L-glutamine + H2O = L-glutamate + NH4(+). Its pathway is cofactor biosynthesis; pyridoxal 5'-phosphate biosynthesis. Catalyzes the hydrolysis of glutamine to glutamate and ammonia as part of the biosynthesis of pyridoxal 5'-phosphate. The resulting ammonia molecule is channeled to the active site of PdxS. This is Pyridoxal 5'-phosphate synthase subunit PdxT from Frankia casuarinae (strain DSM 45818 / CECT 9043 / HFP020203 / CcI3).